A 455-amino-acid chain; its full sequence is uncharacterized protein (455 aa).

12 helical membrane-spanning segments follow: residues 19-39 (FSLF…MFMG), 63-83 (ILNL…VIIS), 106-126 (FFIS…LLHM), 140-160 (FLQV…FSAI), 173-195 (VTIG…LFGF), 200-222 (VAGV…IVIV), 265-285 (MIVT…KVYT), 288-308 (ITMF…ILIG), 324-344 (MKSL…MTIF), 348-368 (LIGL…LIAM), 388-408 (AAGD…GIGL), and 410-430 (LAYL…ISFI).

The protein belongs to the multi antimicrobial extrusion (MATE) (TC 2.A.66.1) family.

It is found in the cell membrane. This is an uncharacterized protein from Bacillus subtilis (strain 168).